Here is an 820-residue protein sequence, read N- to C-terminus: Leucine--tRNA ligase (820 aa).

The short motif at 42 to 52 (PYPSGDLHMGH) is the 'HIGH' region element. The 'KMSKS' region motif lies at 576 to 580 (KMSKS). Residue K579 participates in ATP binding.

The protein belongs to the class-I aminoacyl-tRNA synthetase family.

The protein resides in the cytoplasm. The catalysed reaction is tRNA(Leu) + L-leucine + ATP = L-leucyl-tRNA(Leu) + AMP + diphosphate. This chain is Leucine--tRNA ligase, found in Coxiella burnetii (strain RSA 331 / Henzerling II).